Here is a 316-residue protein sequence, read N- to C-terminus: ATP synthase gamma chain (316 aa).

This sequence belongs to the ATPase gamma chain family. In terms of assembly, F-type ATPases have 2 components, CF(1) - the catalytic core - and CF(0) - the membrane proton channel. CF(1) has five subunits: alpha(3), beta(3), gamma(1), delta(1), epsilon(1). CF(0) has three main subunits: a, b and c.

It is found in the cellular thylakoid membrane. Functionally, produces ATP from ADP in the presence of a proton gradient across the membrane. The gamma chain is believed to be important in regulating ATPase activity and the flow of protons through the CF(0) complex. In Synechococcus elongatus (strain ATCC 33912 / PCC 7942 / FACHB-805) (Anacystis nidulans R2), this protein is ATP synthase gamma chain.